A 505-amino-acid polypeptide reads, in one-letter code: Lysine--tRNA ligase (505 aa).

Residues glutamate 415 and glutamate 422 each contribute to the Mg(2+) site.

This sequence belongs to the class-II aminoacyl-tRNA synthetase family. As to quaternary structure, homodimer. The cofactor is Mg(2+).

It localises to the cytoplasm. It catalyses the reaction tRNA(Lys) + L-lysine + ATP = L-lysyl-tRNA(Lys) + AMP + diphosphate. The polypeptide is Lysine--tRNA ligase (Xanthomonas campestris pv. campestris (strain 8004)).